The sequence spans 342 residues: Biotin synthase (342 aa).

Residues 55–274 (NAVQCNQLLN…IALARIMMPK (220 aa)) enclose the Radical SAM core domain. [4Fe-4S] cluster-binding residues include Cys-70, Cys-74, and Cys-77. Cys-114, Cys-145, Cys-205, and Arg-278 together coordinate [2Fe-2S] cluster.

It belongs to the radical SAM superfamily. Biotin synthase family. Homodimer. [4Fe-4S] cluster is required as a cofactor. The cofactor is [2Fe-2S] cluster.

It catalyses the reaction (4R,5S)-dethiobiotin + (sulfur carrier)-SH + 2 reduced [2Fe-2S]-[ferredoxin] + 2 S-adenosyl-L-methionine = (sulfur carrier)-H + biotin + 2 5'-deoxyadenosine + 2 L-methionine + 2 oxidized [2Fe-2S]-[ferredoxin]. It functions in the pathway cofactor biosynthesis; biotin biosynthesis; biotin from 7,8-diaminononanoate: step 2/2. Functionally, catalyzes the conversion of dethiobiotin (DTB) to biotin by the insertion of a sulfur atom into dethiobiotin via a radical-based mechanism. This is Biotin synthase from Rhodopseudomonas palustris (strain BisB5).